The chain runs to 287 residues: 4-hydroxybenzoate octaprenyltransferase (287 aa).

The next 9 helical transmembrane spans lie at 20–40 (IGSL…ADGL), 43–63 (MHVL…GCVI), 94–114 (LGLF…MNTL), 115–135 (TIML…MKRY), 137–157 (HLPQ…AYAA), 159–179 (AGEL…WTIA), 210–230 (IIIG…GHSL), 235–255 (IYYW…RLIG), and 266–286 (FLNN…SVMM).

Belongs to the UbiA prenyltransferase family. Mg(2+) is required as a cofactor.

It is found in the cell inner membrane. It catalyses the reaction all-trans-octaprenyl diphosphate + 4-hydroxybenzoate = 4-hydroxy-3-(all-trans-octaprenyl)benzoate + diphosphate. It participates in cofactor biosynthesis; ubiquinone biosynthesis. Catalyzes the prenylation of para-hydroxybenzoate (PHB) with an all-trans polyprenyl group. Mediates the second step in the final reaction sequence of ubiquinone-8 (UQ-8) biosynthesis, which is the condensation of the polyisoprenoid side chain with PHB, generating the first membrane-bound Q intermediate 3-octaprenyl-4-hydroxybenzoate. The polypeptide is 4-hydroxybenzoate octaprenyltransferase (Photobacterium profundum (strain SS9)).